Here is a 128-residue protein sequence, read N- to C-terminus: MSNVPTELKYTASHEWVRAEENGVFCVGITDHAQSLLGDMVFVDLPEVGAHIDTGAECAVAESVKAASDIYSPLAGEIVAINGSLEEAPEQVNAAPYDEGWLFRIRADDPAEFAALLSAEGYLAALDE.

Positions 24–106 constitute a Lipoyl-binding domain; the sequence is VFCVGITDHA…YDEGWLFRIR (83 aa). Position 65 is an N6-lipoyllysine (K65).

Belongs to the GcvH family. In terms of assembly, the glycine cleavage system is composed of four proteins: P, T, L and H. (R)-lipoate is required as a cofactor.

In terms of biological role, the glycine cleavage system catalyzes the degradation of glycine. The H protein shuttles the methylamine group of glycine from the P protein to the T protein. This is Glycine cleavage system H protein from Edwardsiella ictaluri (strain 93-146).